We begin with the raw amino-acid sequence, 722 residues long: Probable dipeptidyl-peptidase 5 (722 aa).

The signal sequence occupies residues 1–18; it reads MGALRWLSLAAAASSALA. Asn75, Asn78, Asn86, Asn94, Asn151, Asn253, and Asn448 each carry an N-linked (GlcNAc...) asparagine glycan. The active-site Charge relay system is the Ser558. Asn605 is a glycosylation site (N-linked (GlcNAc...) asparagine). Residues Asp641 and His673 each act as charge relay system in the active site.

It belongs to the peptidase S9C family.

It localises to the secreted. Its function is as follows. Extracellular dipeptidyl-peptidase which removes N-terminal dipeptides sequentially from polypeptides having unsubstituted N-termini. The polypeptide is Probable dipeptidyl-peptidase 5 (dpp5) (Emericella nidulans (strain FGSC A4 / ATCC 38163 / CBS 112.46 / NRRL 194 / M139) (Aspergillus nidulans)).